The following is a 437-amino-acid chain: GTPase Der (437 aa).

EngA-type G domains are found at residues 4-168 (NIVA…PEKP) and 178-353 (PRFA…ENRK). Residues 10–17 (GRPNVGKS), 57–61 (DTGGY), 120–123 (NKVD), 184–191 (GRPNAGKS), 231–235 (DTAGI), and 296–299 (NKWD) contribute to the GTP site. The region spanning 354 to 437 (QRISTSKFNE…VPIDIYIREK (84 aa)) is the KH-like domain.

This sequence belongs to the TRAFAC class TrmE-Era-EngA-EngB-Septin-like GTPase superfamily. EngA (Der) GTPase family. Associates with the 50S ribosomal subunit.

In terms of biological role, GTPase that plays an essential role in the late steps of ribosome biogenesis. The polypeptide is GTPase Der (Flavobacterium johnsoniae (strain ATCC 17061 / DSM 2064 / JCM 8514 / BCRC 14874 / CCUG 350202 / NBRC 14942 / NCIMB 11054 / UW101) (Cytophaga johnsonae)).